Consider the following 382-residue polypeptide: Lipid-A-disaccharide synthase (382 aa).

Belongs to the LpxB family.

It catalyses the reaction 2-N,3-O-bis[(3R)-3-hydroxytetradecanoyl]-alpha-D-glucosaminyl 1-phosphate + UDP-2-N,3-O-bis[(3R)-3-hydroxytetradecanoyl]-alpha-D-glucosamine = lipid A disaccharide (E. coli) + UDP + H(+). The catalysed reaction is a lipid X + a UDP-2-N,3-O-bis[(3R)-3-hydroxyacyl]-alpha-D-glucosamine = a lipid A disaccharide + UDP + H(+). It functions in the pathway glycolipid biosynthesis; lipid IV(A) biosynthesis; lipid IV(A) from (3R)-3-hydroxytetradecanoyl-[acyl-carrier-protein] and UDP-N-acetyl-alpha-D-glucosamine: step 5/6. Its function is as follows. Condensation of UDP-2,3-diacylglucosamine and 2,3-diacylglucosamine-1-phosphate to form lipid A disaccharide, a precursor of lipid A, a phosphorylated glycolipid that anchors the lipopolysaccharide to the outer membrane of the cell. This is Lipid-A-disaccharide synthase from Shigella flexneri serotype 5b (strain 8401).